The primary structure comprises 817 residues: Protein EFR3 homolog B (817 aa).

Residues Ser-212, Ser-214, and Ser-216 each carry the phosphoserine modification.

Belongs to the EFR3 family. In terms of assembly, component of a phosphatidylinositol 4-kinase (PI4K) complex, composed of PI4KA, EFR3 (EFR3A or EFR3B), TTC7 (TTC7A or TTC7B) and HYCC (HYCC1 or HYCC2). In terms of processing, palmitoylated at its N-terminus, anchoring the protein to the plasma membrane.

The protein localises to the cell membrane. It is found in the cytoplasm. Its subcellular location is the cytosol. In terms of biological role, component of a complex required to localize phosphatidylinositol 4-kinase (PI4K) to the plasma membrane. The complex acts as a regulator of phosphatidylinositol 4-phosphate (PtdIns(4)P) synthesis. In the complex, EFR3B probably acts as the membrane-anchoring component. Also involved in responsiveness to G-protein-coupled receptors; it is however unclear whether this role is direct or indirect. This is Protein EFR3 homolog B from Homo sapiens (Human).